We begin with the raw amino-acid sequence, 308 residues long: Zinc-binding protein TroA (308 aa).

The signal sequence occupies residues 1 to 22; that stretch reads MIRERICACVLALGMLTGFTHA. The Zn(2+) site is built by H68, H133, H199, and D279.

The protein belongs to the bacterial solute-binding protein 9 family. Monomer.

The protein localises to the periplasm. In terms of biological role, part of the ATP-binding cassette (ABC) transport system TroABC involved in zinc import. Binds zinc with high affinity and specificity and delivers it to the membrane permease for translocation into the cytoplasm. The sequence is that of Zinc-binding protein TroA (troA) from Treponema pallidum (strain Nichols).